The following is a 247-amino-acid chain: Small ribosomal subunit protein uS2 (247 aa).

It belongs to the universal ribosomal protein uS2 family.

This Ralstonia nicotianae (strain ATCC BAA-1114 / GMI1000) (Ralstonia solanacearum) protein is Small ribosomal subunit protein uS2.